Reading from the N-terminus, the 470-residue chain is Pyruvate kinase I (470 aa).

Arg-32 contributes to the substrate binding site. K(+)-binding residues include Asn-34, Ser-36, Asp-66, and Thr-67. Residue 34–37 (NFSH) coordinates ATP. ATP is bound by residues Arg-73 and Lys-156. Residue Glu-222 coordinates Mg(2+). Residues Gly-245, Asp-246, and Thr-278 each contribute to the substrate site. Asp-246 is a binding site for Mg(2+).

Belongs to the pyruvate kinase family. Homotetramer. The cofactor is Mg(2+). K(+) serves as cofactor.

The enzyme catalyses pyruvate + ATP = phosphoenolpyruvate + ADP + H(+). Its pathway is carbohydrate degradation; glycolysis; pyruvate from D-glyceraldehyde 3-phosphate: step 5/5. This Salmonella typhi protein is Pyruvate kinase I (pykF).